A 314-amino-acid chain; its full sequence is Malate dehydrogenase (314 aa).

NAD(+)-binding positions include 7 to 12 (GAGNVG) and Asp-32. Substrate contacts are provided by Arg-81 and Arg-87. NAD(+)-binding positions include Asn-94 and 117–119 (VAN). Asn-119 and Arg-150 together coordinate substrate. The active-site Proton acceptor is His-174.

Belongs to the LDH/MDH superfamily. MDH type 3 family.

It catalyses the reaction (S)-malate + NAD(+) = oxaloacetate + NADH + H(+). Its function is as follows. Catalyzes the reversible oxidation of malate to oxaloacetate. The chain is Malate dehydrogenase from Salinibacter ruber (strain DSM 13855 / M31).